Here is a 112-residue protein sequence, read N- to C-terminus: cAMP-regulated phosphoprotein 19 (112 aa).

Met1 bears the N-acetylmethionine mark. A compositionally biased stretch (low complexity) spans 1 to 11 (MSAEVPEAASA). Positions 1–49 (MSAEVPEAASAEEQKEMEDKVTSPEKAEEAKLKARYPHLGQKPGGSDFL) are disordered. An N-acetylserine modification is found at Ser2. Ser2 and Ser23 each carry phosphoserine. Residues 12–32 (EEQKEMEDKVTSPEKAEEAKL) are compositionally biased toward basic and acidic residues. A phosphoserine; by GWL mark is found at Ser62 and Ser104. The segment at 72–112 (MKNKQLPTATPDKTEVTGDHIPTPQDLPQRKPSLVASKLAG) is disordered. Ser104 carries the post-translational modification Phosphoserine; by PKA. Lys109 bears the N6-acetyllysine mark.

As to quaternary structure, interacts (when phosphorylated at Ser-62) with PPP2R2D. Interacts with SNCA. Interacts with PPP2R2A; the interaction is direct and this interaction inhibits PP2A activity. Phosphorylation at Ser-62 by MASTL/GWL during mitosis is essential for interaction with PPP2R2D (PR55-delta) and subsequent inactivation of PP2A. Phosphorylated by PKA. In terms of tissue distribution, isoform ARPP-19 is found in all brain regions and also present in non-neuronal tissues. Isoform ARPP-16 is enriched in the caudate nucleus, found in low levels in cerebral cortex.

The protein resides in the cytoplasm. Its function is as follows. Protein phosphatase inhibitor that specifically inhibits protein phosphatase 2A (PP2A) during mitosis. Inhibition of PP2A is enhanced when ARPP19 is phosphorylated. When phosphorylated at Ser-62 during mitosis, specifically interacts with PPP2R2D (PR55-delta) and inhibits its activity, leading to inactivation of PP2A, an essential condition to keep cyclin-B1-CDK1 activity high during M phase. May indirectly enhance GAP-43 expression. This chain is cAMP-regulated phosphoprotein 19 (ARPP19), found in Bos taurus (Bovine).